A 4306-amino-acid polypeptide reads, in one-letter code: MAGSLSDVRKLFLFTTTQNYFGLRPELWDQTPLSNCPEVNNFLDDGNQMLLRVQRSDAGLAFSNTIDFDDTKDKVLVFFKLRPEVITDGNLHTNILVSSMLESPINSLYQAVRQVFAPMLLKDQEWSRNFDPKLQNLLSELEAGLGVVLRKSDTNLPKLKLKEDDTRGILTPSDEFQFWIEQAHRGSKQISKERASYFKELFETIAREFYNLDSLSLLEVVDLVETTRDVVDDVWRQAEHDHYPESRMLHLLDVIGGSFGRFVQKKLGSLKLWEDPYYLVKENLKAGISICEQWVIVCSHLTGQVWQRYVPHPWKSEKYFPETLDRLGKRLEEVLAIRTIHEKLLYFLPASEERIVCLSRVFEPFTGVNPVQYNPYTEPLWKAAVSQYEKIIAPAEQKIAGKLKNYISEIQDSPQQLLQAFLKYKELVKRPTISKELMLERETLLARLGDSAKDFRLDFENRCRGIPGDASGPLSGKNLSEVVNNIVWVRQLELKVDDTIKIAEALLSDLSGFRSFHRSAEDLLDQFKLYEQEQFDDWSREVQSGLSDSRSGLCIEANSRIMELDPNDGALKVHYSDRLVILLREVRQLSALGFVIPAKIQQVANVAQKFCKQAIILKQVAHFYNSIDQQMIQSQRPMMLQSALAFEQIIKNSKAGSGGKSQITWDNPKELEGYIQKLQNAAERLATENRRLRKWHITFCEKVVILMNIDLLRQQQRWKDGLQELRTGLASVAAQGFQPSDMRAWRQHWNHQLYKALEHQYQMGLEALNENLPEINVDLTYKQGRLQFRPPFEEIRAKYYREMKRFIGIPNQFKGVGGAGDESIFSVMIDRNASGFLTIYSKAEDLFRRLSAVLHQHKEWVVIGQVDMEALVEKNLSTVHDWEKNFKALKIKGKEVERLPSAVKVDCLNINCSPVKTVIDDLIQKLFDLLVLSLKKSIQTHIHEIDTFVTEAMKVLTVIPQSVEEIGDTNLQYSNLQDRRPEILPLFQEAEDKNRLLRTVAGGGVETVSNLRAKWDKFELMMESHQLMIKDQIEVMKGNVKSRLQIYYQELDKFKARWDQLKPGDDIIETGQQNTMDQSAKSIKEKKIEFDDLEVIRKKLVDDCHHFGLEESNFSLAYSISKDIESCAQIWALYEEFQQGLQEMAKEDWITYRTKIYIFEEFLINWHERLRKVEEHSVMTVKLQSEVDRYKIIIPILKYVRGEHLSPDHWLDLFRLLGLPRGTSLEKLLFGDLLRVADTIVEKASDLKDLNSRAQGEVTIREALRELDLWGVGAVFSLIDYEDSQNRTIKLIKDWKDIVNQVGDNRCLLQSLKDSPYYKGFEDKVSIWERKLAQLDEYLQNLNHIQRKWVYLEPIFGRGALPKEQTRFNKVDEDFRSIMMDIRKDSRVTTLTTHAGIRNTLLTILDQLQRCQKSLNEFLEEKRSAFPRFYFIGDDDLLEILGQSTNPSVIQSHLKKLFAGINSVCFDEESKHITAMRSLEGEVVPFKSKVLLSNNVEAWLNDLALEMKQTLKQLLKECVTAGRSSQGAIDPSLFPSQILCLAEQIKFTEDVEDAIRDHSLHQIEAQLAAKLERYTSVDTSSEDPGNSESGILELKLKTLILDIIHNIDIVKQLNQAQVHTTDDWAWKKQVRFYMKSDHTCYVQMVDSELQYTYEYQGNAPKLVYTPLTDKCYLTLTQAMKMGLGGNPYGPAGTGKTESVKALGGLLGRQVLVFNCDEGIDVKSMGRIFVGLVKCGAWGCFDEFNRLEEAVLSAVSMQIQTIQDALKNHRSVCELLGKEVEVNANSGIFITMNPAGKGYGGRQKLPDNLKQLFRPVAMSRPDNDLIAEVILYSEGFKDAKELGRKLVAIFNLSRELLTPQQHYDWGLRALKTVLRGSGNLLRQLKKSGTKQDVNENHIVVQALRLNTMSKFTFADCTRFDALIKDVFPGIDFKEVEYNELSSALKQVFEEANYEVIPNQMKKALELYEQLRQRTGVVIVGPSGAGKSTLWRMLRAALCKIGKVVKQYTMNPKAMPRHQLLGHIDMDTREWSDGVLTNSARQVVREPQDVSSWIICDGDIDPEWIESLNSVLDDNRLLTMPSGERIQFGPNVNFVFETHDLSCASPATISRMGMIFLSDEETDLNSLIKSWLRNQPVEYRSNLENWIGDYFSKALQWVLKQNDYVVETSLVGTVMNGLSHLHGCKYHDQFIINLIRGLGGNLNMKSRLEFTKEVFNWARETPPDSHRPMDTYFDCDRGQLASYVLKKPESLTADDFSSGHSLPVIQTPDMQRGLDYFKPWLSSETKQPFILVGPEGCGKGMLLRYAFSQLRSTEIATIHCSAQTTSRHLLQKLSQTCMVISTNTGRVYRPKDCERLVLYLKDINLPKLDKWGTSTLVAFLQQVLTYQGFYDENLEWVGLENIQIVASMSAGGRLGRHKLTTRFTSIVRLCAVDYPEREQLQTIYGAYLEAVLHKNLKNHSIWGSSSKIYLLAGSMVQVYEQVRAKFTVDDYSHYFFTPCILTQWVLGLFRYDLEGGSSNHPLDYVLEVVAYEARRLFRDKIVGVKELHLFDNILTSVLQGDWGSDILDNMADSFYVTWGAQHISGAKIAPGQPLPPHGKPLGKLSSADLKDVIKKGLIHYGRDNQNLDILLFQEVLEYMSRIDRVLSFPGGSLLLAGRSGVGRRTVTSLVSHMHGAVLFSPKISRGYEPKQFRTDLKHVLHLAGIEAQQVVLLLEDYQFVHPTFLEMINSLLSSGEVPGLYTLEELEPLLLPLKDQASQDGFFGPVFNYFTYRIQQNLHIVLIMDSANLNFIINCESNPALHKKCRVLWMEGWSDSSMKKIPEMLFSEADIEEKYEKKRKDEKKKSSVDPDFIKSFLLIHESCKAYGATPSRYMTFLRVYSAISSSKRKELLKRQSHLQAGVSKLNEAKALVDELNRKAGEQSILLRIKQDEADSALQEITVSMQDASEQKTELERLKHRIAEEVVKIEERKSKIDDELKEVQPLVNEAKLAVGNIRPESLSEIRSLRMPPDVIRDILEGVLRLMGIFDTSWVSMKSFLAKRGVREDIATFDARNIPKEIRESVEELLFKNKASFDPKNAKRASTAAAPLAAWVKANVQYSHVLERIQPLETEQSGLELNLKKTEDRKRKLEDLLNSVGQKVSELKEKFQSRTSEAAKLEAEVSKAQETIKAAEVLISQLDREHRRWNAQVAEIAEELATLPKRAQLAAAFITYLSAAPEGLRKNCLEEWTKAAGLEKFDLRRFLCTESEQLIWKSEGLPSDDLSIENALVILQSRVCPFLIDPSSQATEWLKTHLKDSHLEVINQQDSNFITALELAVRFGKTLIIQEMDGVEPVLYPLLRRDLVAQGPRYVVQIGDKIIDYNEDFRLFLSTRNPNPFIPPDAASIVTEVNFTTTRSGLRGQLLALTIQHEKPDLEEQKTKLLQQEEDKKIQLARLEESLLETLATSQGNILENKDLIESLNQTKASSALIQDSLKESYKLQISLDRERDAYLPLAESASKMYFIISDLSKINNMYRFSLASFLRLFQRALQNKQDSESTEQRIQCLVNSLKHMVYEYICRCLFKADQLMFALHFVRGMHPEFFQENEWDTFTGVVVGDMLRKADSQQRIRDQLPSWIDQERSWAVATLKISLPGLYQTLCFEDGTLWRTYYHHSMCEQEFPSILAKKVSLFQQVLVVQALRPDRLQSAMALFACKALGLKELSPLPLNLKRLYKETLEIEPILIIISPGADPSQELQELANAERSSERYHQVAMGQGQADLAIQMLKECARNGDWLCLKNLHLVVSWLPVLEKELNTLQPKESFRLWLTAEVHPNFTPILLQSSLKITYESPPGLKKNLMRTYESWTPEQISKKDNIHRAHALFSLAWFHAACQERRNFIPQGWTKFYEFSLSDLRAGYHVIDRLFDGSKDVQWEFVHGLLENSIYGGRIDNYFDLRVLQSYLKQFFNSSIIDVLNQRNKKSIFPYSISLPDSCSILDYRAVIEKLPEDDKPSFFGLPANIARSSQRMTSSQVISQLRILGRSVTAGCKFDREIWSNELSPVLNLWKKLNQNSNLIHQKVSPPNDRQGSPILSFIILEQFNAIRLVQSVHQSLAALSKVIRGTTLLSSEVQKLASALLNQKCPLTWQSKWEGPEDPLQYLRGLVARTLAIQNWVEKAEKQALLADTLDLSELFHPDTFLNALRQETARATGCSVDSLKFVASWKGRLQEAKLQIKISGLLLEGCSFDGSRLSENQHDSPSVSSVLPCYMGWTPQGSYGPYSPDECISLPVYTSAERDCVVTNIDVPCGGNQDQWIQCGAALFLKNQ.

The segment at 1–1650 (MAGSLSDVRK…YVQMVDSELQ (1650 aa)) is stem. 145–152 (LGVVLRKS) is an ATP binding site. A coiled-coil region spans residues 669-696 (KELEGYIQKLQNAAERLATENRRLRKWH). AAA stretches follow at residues 1651–1875 (YTYE…VLRG), 1941–2161 (SALK…KQND), 2249–2505 (LTAD…WVLG), and 2617–2862 (HYGR…ESCK). ATP-binding positions include 1689–1696 (GPAGTGKT), 1979–1986 (GPSGAGKS), 2291–2298 (GPEGCGKG), and 2655–2662 (GRSGVGRR). The stalk stretch occupies residues 2880–3168 (AISSSKRKEL…AEVSKAQETI (289 aa)). 3 coiled-coil regions span residues 2896-2981 (LQAG…KEVQ), 3108-3199 (LETE…LATL), and 3407-3441 (IQHE…SLLE). AAA regions lie at residues 3243-3472 (LCTE…LIQD) and 3689-3904 (MALF…VIDR).

Belongs to the dynein heavy chain family. The cytoplasmic dynein complex 2 is probably composed by a heavy chain DYNC2H1 homodimer and a number of DYNC2LI1 light intermediate chains. As to expression, widely expressed both in ciliated and unciliated tissues. Detected in brain and testis (at protein level).

The protein localises to the cytoplasm. It localises to the cytoskeleton. The protein resides in the cilium axoneme. Its subcellular location is the cell membrane. In terms of biological role, may function as a motor for intraflagellar retrograde transport. Functions in cilia biogenesis. May play a role in transport between endoplasmic reticulum and Golgi or organization of the Golgi in cells. The sequence is that of Cytoplasmic dynein 2 heavy chain 1 (Dync2h1) from Rattus norvegicus (Rat).